A 194-amino-acid polypeptide reads, in one-letter code: Outer surface 22 kDa lipoprotein (194 aa).

Residues 1–21 (MYKNGFFKNYLSLFLIFLVIA) form the signal peptide. The N-palmitoyl cysteine moiety is linked to residue Cys-22. The S-diacylglycerol cysteine moiety is linked to residue Cys-22.

It localises to the cell outer membrane. In Borreliella burgdorferi (strain ZS7) (Borrelia burgdorferi), this protein is Outer surface 22 kDa lipoprotein (p22).